We begin with the raw amino-acid sequence, 292 residues long: MSESLGSVPGSLRSGVISPGLSLGADISSFTEYLRAHAPDQLPQARAEAMGLHRAADDIPHGTTIVAVSYPGGVILAGDRRATMGNLIATRDVKKVYITDEYSAAGIAGTAGIAIEMVRLFAVELEHYEKLEGVPLTLDGKVSRLASMVRGNLGAALQGLAAVPLLVGYDIDHDDPTERGRIFSFDVAGDRHEEFGGYQAIGSGSVFAKSSLKKLYRHDLDEASALAIAVEALYDAADDDSATGGPDIVRKIFPLAAVVDAGGAREVDAESIEAAARAIVERRAAEHEGGPR.

Residues 1–62 (MSESLGSVPG…HRAADDIPHG (62 aa)) constitute a propeptide, removed in mature form; by autocatalysis. The active-site Nucleophile is Thr-63.

Belongs to the peptidase T1B family. In terms of assembly, the 20S proteasome core is composed of 14 alpha and 14 beta subunits that assemble into four stacked heptameric rings, resulting in a barrel-shaped structure. The two inner rings, each composed of seven catalytic beta subunits, are sandwiched by two outer rings, each composed of seven alpha subunits. The catalytic chamber with the active sites is on the inside of the barrel. Has a gated structure, the ends of the cylinder being occluded by the N-termini of the alpha-subunits. Is capped by the proteasome-associated ATPase, ARC.

The protein localises to the cytoplasm. The catalysed reaction is Cleavage of peptide bonds with very broad specificity.. Its pathway is protein degradation; proteasomal Pup-dependent pathway. Its activity is regulated as follows. The formation of the proteasomal ATPase ARC-20S proteasome complex, likely via the docking of the C-termini of ARC into the intersubunit pockets in the alpha-rings, may trigger opening of the gate for substrate entry. Interconversion between the open-gate and close-gate conformations leads to a dynamic regulation of the 20S proteasome proteolysis activity. Functionally, component of the proteasome core, a large protease complex with broad specificity involved in protein degradation. This chain is Proteasome subunit beta, found in Gordonia bronchialis (strain ATCC 25592 / DSM 43247 / BCRC 13721 / JCM 3198 / KCTC 3076 / NBRC 16047 / NCTC 10667) (Rhodococcus bronchialis).